Reading from the N-terminus, the 223-residue chain is Deoxyribose-phosphate aldolase (223 aa).

Residue D89 is the Proton donor/acceptor of the active site. Catalysis depends on K152, which acts as the Schiff-base intermediate with acetaldehyde. The active-site Proton donor/acceptor is the K181.

The protein belongs to the DeoC/FbaB aldolase family. DeoC type 1 subfamily.

Its subcellular location is the cytoplasm. The enzyme catalyses 2-deoxy-D-ribose 5-phosphate = D-glyceraldehyde 3-phosphate + acetaldehyde. Its pathway is carbohydrate degradation; 2-deoxy-D-ribose 1-phosphate degradation; D-glyceraldehyde 3-phosphate and acetaldehyde from 2-deoxy-alpha-D-ribose 1-phosphate: step 2/2. Its function is as follows. Catalyzes a reversible aldol reaction between acetaldehyde and D-glyceraldehyde 3-phosphate to generate 2-deoxy-D-ribose 5-phosphate. This is Deoxyribose-phosphate aldolase from Listeria welshimeri serovar 6b (strain ATCC 35897 / DSM 20650 / CCUG 15529 / CIP 8149 / NCTC 11857 / SLCC 5334 / V8).